A 385-amino-acid polypeptide reads, in one-letter code: Ribosomal RNA large subunit methyltransferase G (385 aa).

This sequence belongs to the methyltransferase superfamily. RlmG family.

It localises to the cytoplasm. It carries out the reaction guanosine(1835) in 23S rRNA + S-adenosyl-L-methionine = N(2)-methylguanosine(1835) in 23S rRNA + S-adenosyl-L-homocysteine + H(+). Functionally, specifically methylates the guanine in position 1835 (m2G1835) of 23S rRNA. In Vibrio campbellii (strain ATCC BAA-1116), this protein is Ribosomal RNA large subunit methyltransferase G.